Consider the following 491-residue polypeptide: Zinc finger protein 655 (491 aa).

Residues 1 to 52 (MEEIPAQEAAGSPRVQFQSLETQSECLSPEPQFVQDTDMEQGLTGDGETREE) are disordered. Polar residues predominate over residues 15 to 26 (VQFQSLETQSEC). At glutamine 60 the chain carries Phosphoserine. Glycyl lysine isopeptide (Lys-Gly) (interchain with G-Cter in SUMO2) cross-links involve residues lysine 77, lysine 190, and lysine 201. 6 C2H2-type zinc fingers span residues 212 to 234 (YKCD…QRIH), 240 to 262 (YKCK…KRIH), 303 to 325 (YKCS…QKIH), 330 to 353 (CKCT…RVHH), 380 to 402 (YTCS…QRIH), and 408 to 430 (HECN…HKMH).

It belongs to the krueppel C2H2-type zinc-finger protein family. As to quaternary structure, interacts with VAV1 and CDK4. Interacts with INTS13; promoting association with the integrator complex.

It localises to the nucleus. In terms of biological role, probable transcription factor. In Homo sapiens (Human), this protein is Zinc finger protein 655.